Here is a 466-residue protein sequence, read N- to C-terminus: ATP synthase subunit beta (466 aa).

153–160 (GGAGVGKT) is an ATP binding site.

Belongs to the ATPase alpha/beta chains family. As to quaternary structure, F-type ATPases have 2 components, CF(1) - the catalytic core - and CF(0) - the membrane proton channel. CF(1) has five subunits: alpha(3), beta(3), gamma(1), delta(1), epsilon(1). CF(0) has three main subunits: a(1), b(2) and c(9-12). The alpha and beta chains form an alternating ring which encloses part of the gamma chain. CF(1) is attached to CF(0) by a central stalk formed by the gamma and epsilon chains, while a peripheral stalk is formed by the delta and b chains.

It localises to the cell membrane. The catalysed reaction is ATP + H2O + 4 H(+)(in) = ADP + phosphate + 5 H(+)(out). Functionally, produces ATP from ADP in the presence of a proton gradient across the membrane. The catalytic sites are hosted primarily by the beta subunits. In Clostridium acetobutylicum (strain ATCC 824 / DSM 792 / JCM 1419 / IAM 19013 / LMG 5710 / NBRC 13948 / NRRL B-527 / VKM B-1787 / 2291 / W), this protein is ATP synthase subunit beta.